Consider the following 2053-residue polypeptide: Cell adhesion molecule DSCAML1 (2053 aa).

An N-terminal signal peptide occupies residues 1 to 18 (MWLVTFLLLLDSLHKARP). 9 Ig-like C2-type domains span residues 19–119 (EDVG…NIRV), 115–217 (PNIR…ARLS), 226–306 (PTIL…AEAT), 314–402 (PLHV…AIIA), 408–501 (PRIV…ARIN), 506–586 (PSIR…LSIS), 596–685 (PPLI…RQLI), 690–784 (PRFV…MFLT), and 788–885 (PAMI…LTVQ). The Extracellular portion of the chain corresponds to 19-1591 (EDVGTSLYFV…AQGEGDDVKK (1573 aa)). N-linked (GlcNAc...) asparagine glycans are attached at residues Asn29 and Asn79. Disulfide bonds link Cys47–Cys103, Cys146–Cys198, Cys247–Cys294, Cys336–Cys386, and Cys429–Cys485. 9 N-linked (GlcNAc...) asparagine glycosylation sites follow: Asn368, Asn471, Asn513, Asn556, Asn666, Asn710, Asn749, Asn796, and Asn809. 2 disulfides stabilise this stretch: Cys526-Cys575 and Cys617-Cys669. Cys711 and Cys767 are disulfide-bonded. Residues Cys810 and Cys867 are joined by a disulfide bond. Fibronectin type-III domains follow at residues 887–984 (PPDP…TEEA), 989–1088 (PPMD…TLED), 1093–1189 (PPEN…TKED), and 1193–1288 (PPAG…AGKA). 6 N-linked (GlcNAc...) asparagine glycosylation sites follow: Asn926, Asn1082, Asn1144, Asn1162, Asn1275, and Asn1345. An Ig-like C2-type 10 domain is found at 1278 to 1377 (EKVTIEPAGK…TGGFDTIIVN (100 aa)). Cys1311 and Cys1363 are oxidised to a cystine. Fibronectin type-III domains are found at residues 1383-1477 (PPDQ…THGR) and 1478-1578 (EPSF…TIPP). 3 N-linked (GlcNAc...) asparagine glycosylation sites follow: Asn1492, Asn1531, and Asn1561. The chain crosses the membrane as a helical span at residues 1592 to 1612 (LFTIGCPVILATLGVALLFIV). At 1613–2053 (RKKRKEKRLK…GAYSKSYTLV (441 aa)) the chain is on the cytoplasmic side. 4 disordered regions span residues 1715–1741 (PLIDMSDIRPGTNPVSRKNVKSAHSTR), 1773–1803 (HGVTVTESDSYSASLSQDTDKGRNSMVSTES), 1840–1862 (SSDQMTTGTNENADSMTSMSTPS), and 1974–2053 (LAMP…YTLV). Over residues 1732–1741 (KNVKSAHSTR) the composition is skewed to basic residues. The segment covering 1773-1789 (HGVTVTESDSYSASLSQ) has biased composition (polar residues). The segment covering 1977–2009 (PAPPAGTAPPAPGPTPAEPPTAPSAAPPAPSTE) has biased composition (pro residues). The span at 2029–2041 (EMSTSGVGRSQKQ) shows a compositional bias: polar residues.

In terms of assembly, homodimer; mediates homophilic interactions to promote cell adhesion. Detected in heart, liver, pancreas, skeletal muscle, kidney and in brain, in particular in the amygdala, caudate nucleus, corpus callosum, hippocampus, substantia nigra, thalamus and subthalamus.

The protein resides in the cell membrane. Its subcellular location is the synapse. In terms of biological role, cell adhesion molecule that plays a role in neuronal self-avoidance. Promotes repulsion between specific neuronal processes of either the same cell or the same subtype of cells. Promotes both isoneuronal self-avoidance for creating an orderly neurite arborization in retinal rod bipolar cells and heteroneuronal self-avoidance to maintain mosaic spacing between AII amacrine cells. Adhesion molecule that promotes lamina-specific synaptic connections in the retina: expressed in specific subsets of interneurons and retinal ganglion cells (RGCs) and promotes synaptic connectivity via homophilic interactions. The sequence is that of Cell adhesion molecule DSCAML1 (DSCAML1) from Homo sapiens (Human).